Consider the following 78-residue polypeptide: Major outer membrane lipoprotein Lpp (78 aa).

The first 20 residues, 1 to 20 (MNRTKLVLGAVILGSTLLAG), serve as a signal peptide directing secretion. Residue Cys21 is the site of N-palmitoyl cysteine attachment. A lipid anchor (S-diacylglycerol cysteine) is attached at Cys21. 2 consecutive repeats follow at residues 24 to 34 (NAKIDQLSSDV) and 38 to 48 (NAKVDQLSNDV). Residues 27–75 (IDQLSSDVQTLNAKVDQLSNDVNAIRSDVQAAKDDAARANQRLDNQVRT) are a coiled coil. Lys78 carries the post-translational modification N6-murein peptidoglycan lysine.

Belongs to the Lpp family. In terms of assembly, homotrimer.

It localises to the cell outer membrane. Its subcellular location is the secreted. It is found in the cell wall. In terms of biological role, a highly abundant outer membrane lipoprotein that controls the distance between the inner and outer membranes. The only protein known to be covalently linked to the peptidoglycan network (PGN). Also non-covalently binds the PGN. The link between the cell outer membrane and PGN contributes to maintenance of the structural and functional integrity of the cell envelope, and maintains the correct distance between the PGN and the outer membrane. The polypeptide is Major outer membrane lipoprotein Lpp (Pectobacterium atrosepticum (strain SCRI 1043 / ATCC BAA-672) (Erwinia carotovora subsp. atroseptica)).